Here is a 500-residue protein sequence, read N- to C-terminus: MAFRLKSDVRLAGSWLCLRGARALGTRAVTASKASVLPFEVIPQHQGNKRQRVLQFWKEQNHDDLHLEMHQTFQELGPIFRCDVGSTRIVAVMLPEDCARLHQAESPYPHRMHLEPWMAYREHRRQNLGVFLLNGPEWLSNRRWLNPNVLSPKAVQNLLPMVDTVARDFSEALKQKVLQSAQGSLTMDMQPDIHKYTVEVSNFALFGERLGLFGCNPSSQSLKFIHALEAVFKTTTQLMFLPRSLSRWMRSQAWKEHFEAWDYISEYAENRIQKKYEELARGCSQYNSIVANLMLQGNLPLRAMKANIMDLVAGSVDTTALPLMMTLFELARNPTVQQALRQESMATEPNIYENPQRLRMELPLLWAAIKETLRMYPVGLFLERFLTSPLVLQNYHIPAGTLVHLNLYSMGRNPEVFLSPEHYNPQRWLENKETYKHLAFGFGVRQCIGRRLAEVEMLLFLHHVLKSFCVETAFQEDVKFAYRFVMMPTSAPLLTFRPVS.

The N-terminal 24 residues, 1–24 (MAFRLKSDVRLAGSWLCLRGARAL), are a transit peptide targeting the mitochondrion. Residue Cys-447 participates in heme binding.

The protein belongs to the cytochrome P450 family. Heme serves as cofactor.

The protein localises to the mitochondrion inner membrane. It carries out the reaction a steroid + 2 reduced [adrenodoxin] + O2 + 2 H(+) = an 11beta-hydroxysteroid + 2 oxidized [adrenodoxin] + H2O. It catalyses the reaction 11-deoxycortisol + 2 reduced [adrenodoxin] + O2 + 2 H(+) = cortisol + 2 oxidized [adrenodoxin] + H2O. The catalysed reaction is 21-hydroxyprogesterone + 2 reduced [adrenodoxin] + O2 + 2 H(+) = corticosterone + 2 oxidized [adrenodoxin] + H2O. The enzyme catalyses 21-hydroxyprogesterone + 2 reduced [adrenodoxin] + O2 + 2 H(+) = 18-hydroxy-11-deoxycorticosterone + 2 oxidized [adrenodoxin] + H2O. It carries out the reaction 21-hydroxyprogesterone + 2 reduced [adrenodoxin] + O2 + 2 H(+) = 19-hydroxy-11-deoxycorticosterone + 2 oxidized [adrenodoxin] + H2O. It catalyses the reaction cortisol + 2 reduced [adrenodoxin] + O2 + 2 H(+) = 18-hydroxycortisol + 2 oxidized [adrenodoxin] + H2O. The catalysed reaction is 11-deoxycortisol + 2 reduced [adrenodoxin] + O2 + 2 H(+) = 18-hydroxy-11-deoxycortisol + 2 oxidized [adrenodoxin] + H2O. It participates in steroid biosynthesis; glucocorticoid biosynthesis. The protein operates within steroid hormone biosynthesis. Functionally, a cytochrome P450 monooxygenase involved in the biosynthesis of adrenal corticoids. Catalyzes a variety of reactions that are essential for many species, including detoxification, defense, and the formation of endogenous chemicals like steroid hormones. Steroid 11beta, 18- and 19-hydroxylase with preferred regioselectivity at 11beta, then 18, and lastly 19. Catalyzes the hydroxylation of 11-deoxycortisol and 11-deoxycorticosterone (21-hydroxyprogesterone) at 11beta position, yielding cortisol or corticosterone, respectively, but cannot produce aldosterone. Mechanistically, uses molecular oxygen inserting one oxygen atom into a substrate for hydroxylation and reducing the second into a water molecule. Two electrons are provided by NADPH via a two-protein mitochondrial transfer system comprising flavoprotein FDXR (adrenodoxin/ferredoxin reductase) and nonheme iron-sulfur protein FDX1 or FDX2 (adrenodoxin/ferredoxin). Due to its lack of 18-oxidation activity, it is incapable of generating aldosterone. Could also be involved in the androgen metabolic pathway. This chain is Cytochrome P450 11B1, mitochondrial (CYP11B1), found in Cavia porcellus (Guinea pig).